The primary structure comprises 1521 residues: Suppressor of Ty 6 homolog (1521 aa).

Residues 1–238 (MDFIDNQAEE…EEIIEDDGEG (238 aa)) are disordered. The segment covering 26-41 (KKMKMAKEKSKRKKKM) has biased composition (basic residues). The Nuclear localization signal motif lies at 26 to 42 (KKMKMAKEKSKRKKKMV). Composition is skewed to acidic residues over residues 45 to 56 (SDEDEDDDDDEE) and 67 to 76 (ADDDDEEEDA). Basic and acidic residues predominate over residues 77 to 89 (KSEKSEKSRHSGE). Residues 90–99 (DELDDEDLDL) are compositionally biased toward acidic residues. Residues 126–157 (PIRRPNHEDDDLLSERGSDDGDRRKDRGRGDR) are compositionally biased toward basic and acidic residues. 3 stretches are compositionally biased toward acidic residues: residues 166–176 (RSEDDFIEDDG), 191–200 (NLPEGAEDDA), and 209–238 (FNLDEFYDDDDGEDGLEDEEEEIIEDDGEG). Residues 1183–1252 (LGDSRQGGCP…ERFSLFLSCK (70 aa)) form the S1 motif domain. Residues 1300-1389 (HPNFHNVSYE…IARFVQPMIQ (90 aa)) form the SH2 domain.

This sequence belongs to the SPT6 family. As to quaternary structure, interacts with glp-1 and lin-12. Abundant in embryos, and less abundant in larvae.

It localises to the nucleus. In terms of biological role, histone H3-H4 chaperone that plays a role in maintenance of chromatin structure during RNA polymerase II transcription elongation. Required for several aspects of morphogenesis of C.elegans, including regulation of division in the germline and gut and specification of ventral-uterine precursor cell fate. The protein is Suppressor of Ty 6 homolog (emb-5) of Caenorhabditis elegans.